We begin with the raw amino-acid sequence, 329 residues long: Protein mlo2 (329 aa).

The UBR-type zinc-finger motif lies at 33–104; sequence DTCTYSMGYL…HSIPCNLRKS (72 aa). The PHD-type zinc finger occupies 120 to 179; it reads GRFCICDTVYNPETEEGTMFQCILCEDWFHEKCLQKTNKGIAIPDAETFEWLVCSECSEK.

This sequence belongs to the UBR7 family.

Its function is as follows. Not known, interfere with mitotic chromosome segregation when overexpressed. The sequence is that of Protein mlo2 (mlo2) from Schizosaccharomyces pombe (strain 972 / ATCC 24843) (Fission yeast).